Here is a 332-residue protein sequence, read N- to C-terminus: Cytoplasmic phosphatidylinositol transfer protein 1 (332 aa).

Phosphoserine occurs at positions 119, 270, and 274. The segment covering S267–P285 has biased composition (low complexity). Residues S267–E332 form a disordered region. T278 bears the Phosphothreonine mark. The segment covering S322–E332 has biased composition (basic and acidic residues).

Belongs to the PtdIns transfer protein family. PI transfer class IIB subfamily. In terms of tissue distribution, ubiquitously expressed.

The protein localises to the cytoplasm. It carries out the reaction a 1,2-diacyl-sn-glycero-3-phospho-(1D-myo-inositol)(in) = a 1,2-diacyl-sn-glycero-3-phospho-(1D-myo-inositol)(out). The enzyme catalyses a 1,2-diacyl-sn-glycero-3-phosphate(in) = a 1,2-diacyl-sn-glycero-3-phosphate(out). Catalyzes the transfer of phosphatidylinositol (PI) and phosphatidic acid (PA) between membranes. Binds PA derived from the phospholipase D signaling pathway and among the cellular PA species, preferably binds to the C16:0/16:1 and C16:1/18:1 PA species. Functionally, catalyzes the transfer of phosphatidylinositol between membranes. The chain is Cytoplasmic phosphatidylinositol transfer protein 1 (PITPNC1) from Homo sapiens (Human).